We begin with the raw amino-acid sequence, 602 residues long: Elongation factor 4 (602 aa).

In terms of domain architecture, tr-type G spans 7–188 (ENIRNFSIIA…SIIRLVPPPK (182 aa)). GTP is bound by residues 19–24 (DHGKST) and 135–138 (NKID).

The protein belongs to the TRAFAC class translation factor GTPase superfamily. Classic translation factor GTPase family. LepA subfamily.

It is found in the cell inner membrane. It carries out the reaction GTP + H2O = GDP + phosphate + H(+). In terms of biological role, required for accurate and efficient protein synthesis under certain stress conditions. May act as a fidelity factor of the translation reaction, by catalyzing a one-codon backward translocation of tRNAs on improperly translocated ribosomes. Back-translocation proceeds from a post-translocation (POST) complex to a pre-translocation (PRE) complex, thus giving elongation factor G a second chance to translocate the tRNAs correctly. Binds to ribosomes in a GTP-dependent manner. This Chlamydia trachomatis serovar D (strain ATCC VR-885 / DSM 19411 / UW-3/Cx) protein is Elongation factor 4.